We begin with the raw amino-acid sequence, 293 residues long: MTIQYYFDLIKPGIVLGNIISAISGFLLATHHEHHINYIILMYMILGTTLVIASSCVLNNIIDRDIDAIMDRTKNRVLAKNINSCFVKNSIIYAIILNTLGFLFLGLTKNLLTILLTMIGFLVYIGIYSLWMKRKSIYSTIIGSISGSMPPIIGYCTVSHTLDTGAWLLFIAFSFWQIPHSYSITIFRSQDYKKASIPTFNIKKGIKLTRIHMILCILIFTLANISLTVLGYTSYTFLYIISIMSIFWLYTGWYQYKQLDNDLKWAKKMFILSIVIITSLNVLLSLDSIFIFY.

9 consecutive transmembrane segments (helical) span residues 9–29 (LIKPGIVLGNIISAISGFLLA), 38–58 (YIILMYMILGTTLVIASSCVL), 86–106 (FVKNSIIYAIILNTLGFLFLG), 111–131 (LLTILLTMIGFLVYIGIYSLW), 137–157 (IYSTIIGSISGSMPPIIGYCT), 167–187 (WLLFIAFSFWQIPHSYSITIF), 211–231 (IHMILCILIFTLANISLTVLG), 234–254 (SYTFLYIISIMSIFWLYTGWY), and 271–291 (ILSIVIITSLNVLLSLDSIFI).

It belongs to the UbiA prenyltransferase family. Protoheme IX farnesyltransferase subfamily.

Its subcellular location is the cell inner membrane. The enzyme catalyses heme b + (2E,6E)-farnesyl diphosphate + H2O = Fe(II)-heme o + diphosphate. It functions in the pathway porphyrin-containing compound metabolism; heme O biosynthesis; heme O from protoheme: step 1/1. Functionally, converts heme B (protoheme IX) to heme O by substitution of the vinyl group on carbon 2 of heme B porphyrin ring with a hydroxyethyl farnesyl side group. The protein is Protoheme IX farnesyltransferase of Blochmanniella floridana.